The chain runs to 333 residues: uncharacterized protein (333 aa).

This sequence belongs to the proline racemase family.

This is an uncharacterized protein from Vibrio parahaemolyticus serotype O3:K6 (strain RIMD 2210633).